Consider the following 237-residue polypeptide: MKITWLGHAAFRVETAKAVILIDPFLNGNPGAKGIDFKEATRGVTHIALTHGHGDHVGDTVAIAREHGATVIANADLASWLGSQGVEKLDPGNTGGTLAHEGFTITFVNALHSSAMLTENGVSQALGNPNGLVFHFEDSPTLYHMGDTDIFSDMALINELHQPEIGIVPIGDRFTMGGAVAALACQRYFNFNSVLPCHYASFPIIDRTADKFIAGMADHPATKVLADPAGTVHSFQA.

This sequence belongs to the UPF0173 family.

This Brucella abortus biovar 1 (strain 9-941) protein is UPF0173 metal-dependent hydrolase BruAb2_0628.